A 332-amino-acid polypeptide reads, in one-letter code: Adenine deaminase (332 aa).

Zn(2+)-binding residues include His-14, His-16, and His-194. The active-site Proton donor is Glu-197. A Zn(2+)-binding site is contributed by Asp-275. Asp-276 lines the substrate pocket.

Belongs to the metallo-dependent hydrolases superfamily. Adenosine and AMP deaminases family. Adenine deaminase type 2 subfamily. The cofactor is Zn(2+).

The catalysed reaction is adenine + H2O + H(+) = hypoxanthine + NH4(+). Its function is as follows. Catalyzes the hydrolytic deamination of adenine to hypoxanthine. Plays an important role in the purine salvage pathway and in nitrogen catabolism. The protein is Adenine deaminase of Psychrobacter cryohalolentis (strain ATCC BAA-1226 / DSM 17306 / VKM B-2378 / K5).